Reading from the N-terminus, the 688-residue chain is Lipase (688 aa).

The signal sequence occupies residues 1 to 35 (MKTRQNKYSIRKFSVGASSILIAALLFMGGGSAQA). The disordered stretch occupies residues 31-309 (GSAQAAEQQQ…KSAKQKQYKN (279 aa)). Residues 36 to 302 (AEQQQDKGTV…KNEDQTNKSA (267 aa)) constitute a propeptide, removed in mature form. Over residues 45-54 (VENSTTQSIG) the composition is skewed to polar residues. 2 stretches are compositionally biased toward basic and acidic residues: residues 84–95 (ESLHNETPKNED) and 103–143 (SQND…KHAS). Polar residues-rich tracts occupy residues 144-175 (ENNQTLHSKAAQSNEDVKTKPSQLDNTTAQQE) and 184-211 (KQDTQSSKTTDLLRATGQNQSKDSQSTE). Positions 227–268 (KNDDDKVETFNLNSKEEPLKVDKQANPTTDKDKSSKNDKGSH) are enriched in basic and acidic residues. Over residues 274–289 (LESNAVATTNKQSKQQ) the composition is skewed to polar residues. The active-site Nucleophile is the Ser-418. Residue Asp-609 is the Charge relay system of the active site. Asp-647 is a Ca(2+) binding site. Residue His-648 is the Charge relay system of the active site. 3 residues coordinate Ca(2+): Asp-650, Asp-655, and Asp-658.

This sequence belongs to the AB hydrolase superfamily. Lipase family.

It is found in the secreted. The catalysed reaction is a triacylglycerol + H2O = a diacylglycerol + a fatty acid + H(+). The chain is Lipase (lip) from Staphylococcus epidermidis (strain ATCC 35984 / DSM 28319 / BCRC 17069 / CCUG 31568 / BM 3577 / RP62A).